Here is a 1042-residue protein sequence, read N- to C-terminus: Kinesin-like protein KIN-5A (1042 aa).

Residues 1–14 (MDSNNSKKGSSVKS) are compositionally biased toward low complexity. Positions 1-45 (MDSNNSKKGSSVKSPCQTPRSTEKSNRDFRVDSNSNSNPVSKNEK) are disordered. Residues 21-31 (STEKSNRDFRV) show a composition bias toward basic and acidic residues. The segment covering 32-41 (DSNSNSNPVS) has biased composition (polar residues). Residues 50–392 (NIQVIVRCRP…LDYAHRAKHI (343 aa)) enclose the Kinesin motor domain. 136 to 143 (GQTGTGKT) serves as a coordination point for ATP. Residues 480–517 (TAGLREKLDKTEKKLYETEQALLDLEEKHRQAVATIKE) adopt a coiled-coil conformation. The tract at residues 1021-1042 (KQMQNGEAKHVSNGRPPLTAIN) is disordered.

The protein belongs to the TRAFAC class myosin-kinesin ATPase superfamily. Kinesin family. KIN-5/BimC subfamily.

It is found in the cytoplasm. Its subcellular location is the cytoskeleton. It localises to the spindle. In terms of biological role, responsible for microtubule translocation. May be important for the organization of phragmoplast-specific arrays of microtubules. Plays an essential role in stabilizing the mitotic spindle. Required during mitotic cytokinesis. The chain is Kinesin-like protein KIN-5A from Arabidopsis thaliana (Mouse-ear cress).